A 439-amino-acid chain; its full sequence is Ribosomal protein uS12 methylthiotransferase RimO (439 aa).

The region spanning 3-113 (HKVGFVSLGC…VVNAVHQHLP (111 aa)) is the MTTase N-terminal domain. 6 residues coordinate [4Fe-4S] cluster: Cys12, Cys48, Cys77, Cys144, Cys148, and Cys151. Residues 130 to 367 (LTPRHYAYLK…MQVQAEISRN (238 aa)) enclose the Radical SAM core domain. In terms of domain architecture, TRAM spans 370-436 (KNKIGSTQTV…DYDLYGDLEY (67 aa)).

The protein belongs to the methylthiotransferase family. RimO subfamily. [4Fe-4S] cluster serves as cofactor.

The protein localises to the cytoplasm. The enzyme catalyses L-aspartate(89)-[ribosomal protein uS12]-hydrogen + (sulfur carrier)-SH + AH2 + 2 S-adenosyl-L-methionine = 3-methylsulfanyl-L-aspartate(89)-[ribosomal protein uS12]-hydrogen + (sulfur carrier)-H + 5'-deoxyadenosine + L-methionine + A + S-adenosyl-L-homocysteine + 2 H(+). In terms of biological role, catalyzes the methylthiolation of an aspartic acid residue of ribosomal protein uS12. This is Ribosomal protein uS12 methylthiotransferase RimO from Legionella pneumophila (strain Corby).